A 597-amino-acid chain; its full sequence is NADPH-dependent diflavin oxidoreductase 1 (597 aa).

The 145-residue stretch at 6-150 (LLVLFGSQTG…AIDPWLQDLW (145 aa)) folds into the Flavodoxin-like domain. FMN contacts are provided by residues 12–17 (SQTGTA), 59–62 (ATTG), 97–106 (LGDSSYAKFN), and aspartate 132. An FAD-binding FR-type domain is found at 206 to 446 (LQPFLAPMVS…WVRSGGLTFP (241 aa)). Residues arginine 350, 382 to 385 (RAFS), and 416 to 419 (GLCS) each bind FAD. Residues threonine 460, 515–516 (SR), 521–525 (KVYVQ), and aspartate 558 each bind NADP(+). Tryptophan 596 provides a ligand contact to FAD.

Belongs to the NADPH-dependent diflavin oxidoreductase NDOR1 family. It in the N-terminal section; belongs to the flavodoxin family. The protein in the C-terminal section; belongs to the flavoprotein pyridine nucleotide cytochrome reductase family. Interacts with CIAPIN1; as part of the cytosolic iron-sulfur (Fe-S) protein assembly (CIA) machinery. Interacts with DCPS. Requires FAD as cofactor. It depends on FMN as a cofactor.

The protein resides in the cytoplasm. It localises to the perinuclear region. It catalyses the reaction 2 oxidized [2Fe-2S]-[protein] + NADPH = 2 reduced [2Fe-2S]-[protein] + NADP(+) + H(+). NADPH-dependent reductase which is a central component of the cytosolic iron-sulfur (Fe-S) protein assembly (CIA) machinery. Transfers electrons from NADPH via its FAD and FMN prosthetic groups to the [2Fe-2S] cluster of CIAPIN1, another key component of the CIA machinery. In turn, this reduced cluster provides electrons for assembly of cytosolic iron-sulfur cluster proteins. It can also reduce the [2Fe-2S] cluster of CISD1 and activate this protein implicated in Fe/S cluster repair. In vitro can fully activate methionine synthase/MTR in the presence of soluble cytochrome b5/CYB5A. The sequence is that of NADPH-dependent diflavin oxidoreductase 1 from Bos taurus (Bovine).